A 187-amino-acid chain; its full sequence is Elongation factor P (187 aa).

Belongs to the elongation factor P family.

The protein localises to the cytoplasm. The protein operates within protein biosynthesis; polypeptide chain elongation. Functionally, involved in peptide bond synthesis. Stimulates efficient translation and peptide-bond synthesis on native or reconstituted 70S ribosomes in vitro. Probably functions indirectly by altering the affinity of the ribosome for aminoacyl-tRNA, thus increasing their reactivity as acceptors for peptidyl transferase. In Corynebacterium kroppenstedtii (strain DSM 44385 / JCM 11950 / CIP 105744 / CCUG 35717), this protein is Elongation factor P.